The chain runs to 340 residues: Glyceraldehyde-3-phosphate dehydrogenase 2 (340 aa).

NADP(+) contacts are provided by residues 12–13 (RI), R78, and T120. D-glyceraldehyde 3-phosphate contacts are provided by residues 151 to 153 (SCT) and T182. The active-site Nucleophile is C152. N183 serves as a coordination point for NADP(+). D-glyceraldehyde 3-phosphate-binding positions include R197, 210–211 (TG), and R233. Residue N315 coordinates NADP(+).

Belongs to the glyceraldehyde-3-phosphate dehydrogenase family. In terms of assembly, homotetramer. Interacts with BrxC. In response to oxidative stress, the active site Cys likely reacts with bacillithiol (BSH) to form mixed disulfides to protect the Cys residue against overoxidation. S-bacillithiolation presumably leads to loss of catalytic activity. Debacillithiolation by monothiol bacilliredoxin BrxC restores the activity.

The protein localises to the cytoplasm. It carries out the reaction D-glyceraldehyde 3-phosphate + phosphate + NADP(+) = (2R)-3-phospho-glyceroyl phosphate + NADPH + H(+). The catalysed reaction is D-glyceraldehyde 3-phosphate + phosphate + NAD(+) = (2R)-3-phospho-glyceroyl phosphate + NADH + H(+). It functions in the pathway carbohydrate biosynthesis; gluconeogenesis. Its function is as follows. Involved in the gluconeogenesis. Catalyzes the oxidative phosphorylation of glyceraldehyde 3-phosphate (G3P) to 1,3-bisphosphoglycerate (BPG) using the cofactor NADP. The first reaction step involves the formation of a hemiacetal intermediate between G3P and a cysteine residue, and this hemiacetal intermediate is then oxidized to a thioester, with concomitant reduction of NADP to NADPH. The reduced NADPH is then exchanged with the second NADP, and the thioester is attacked by a nucleophilic inorganic phosphate to produce BPG. The sequence is that of Glyceraldehyde-3-phosphate dehydrogenase 2 from Bacillus subtilis (strain 168).